Reading from the N-terminus, the 272-residue chain is NH(3)-dependent NAD(+) synthetase (272 aa).

Position 45 to 52 (45 to 52 (GISGGQDS)) interacts with ATP. Asp-51 contributes to the Mg(2+) binding site. Arg-138 lines the deamido-NAD(+) pocket. Residue Thr-158 participates in ATP binding. Glu-163 contacts Mg(2+). The deamido-NAD(+) site is built by Lys-171 and Asp-178. The ATP site is built by Lys-187 and Thr-209. Residue 258 to 259 (HK) coordinates deamido-NAD(+).

The protein belongs to the NAD synthetase family. In terms of assembly, homodimer.

The enzyme catalyses deamido-NAD(+) + NH4(+) + ATP = AMP + diphosphate + NAD(+) + H(+). Its pathway is cofactor biosynthesis; NAD(+) biosynthesis; NAD(+) from deamido-NAD(+) (ammonia route): step 1/1. Catalyzes the ATP-dependent amidation of deamido-NAD to form NAD. Uses ammonia as a nitrogen source. The polypeptide is NH(3)-dependent NAD(+) synthetase (Bacillus mycoides (strain KBAB4) (Bacillus weihenstephanensis)).